A 925-amino-acid polypeptide reads, in one-letter code: GPI ethanolamine phosphate transferase 1 (925 aa).

Residues 1–6 lie on the Cytoplasmic side of the membrane; it reads MWNKHR. Residues 7-27 form a helical membrane-spanning segment; that stretch reads LAFILVGLLFHLFYLRSIFDI. Topologically, residues 28–457 are lumenal; it reads YFVSPLVHGM…TTYNWRFIRS (430 aa). N-linked (GlcNAc...) asparagine glycans are attached at residues asparagine 90, asparagine 138, asparagine 198, asparagine 286, asparagine 312, and asparagine 358. A helical membrane pass occupies residues 458-478; the sequence is IVTLGFIGWITYSFTIFLRLF. Residues 479–492 are Cytoplasmic-facing; that stretch reads ILEKQYAMKTSPQN. The helical transmembrane segment at 493-510 threads the bilayer; the sequence is LASFGALTAALNYVLYYQ. Topologically, residues 511 to 516 are lumenal; it reads RSPFNY. The helical transmembrane segment at 517 to 537 threads the bilayer; the sequence is YMYLLFPLFFWSQILTNSTIL. Residues 538–547 are Cytoplasmic-facing; it reads HDGIREMFKG. A helical transmembrane segment spans residues 548–568; that stretch reads VSMLQRIGICALIVSIYEGIV. At 569-574 the chain is on the lumenal side; sequence YGYFDR. Residues 575-595 form a helical membrane-spanning segment; sequence WIFTIIFNLLALYPFFCGIKD. Over 596–599 the chain is Cytoplasmic; the sequence is AKTN. A helical transmembrane segment spans residues 600–620; the sequence is MFWGANSMALSIFTLFDAVKI. Glutamate 621 is a topological domain (lumenal). Residues 622-642 form a helical membrane-spanning segment; that stretch reads SLTQINVSGLLLVASGLYALW. The Cytoplasmic portion of the chain corresponds to 643-653; that stretch reads RVSKKINSHTK. The helical transmembrane segment at 654–674 threads the bilayer; that stretch reads IVILLQILLLAMMLAVTNKSV. Topologically, residues 675-687 are lumenal; it reads TSLQQRAGLPTDA. Residues 688 to 708 form a helical membrane-spanning segment; sequence KIAGWVILTLSLSLMPLLHYL. The Cytoplasmic segment spans residues 709–719; sequence KPSNDYQVRVL. Residues 720-740 form a helical membrane-spanning segment; it reads VIYLTFAPTFLILTISFESFF. Over 741–775 the chain is Lumenal; that stretch reads YLLFTNYLMLWIEIESKIKAQNIAKNSQNWLQLLR. The helical transmembrane segment at 776-796 threads the bilayer; it reads ISIIGFFLLQFAFFGTGNVAS. The Cytoplasmic segment spans residues 797–818; that stretch reads ISSFSLDSVYRLMPVFDPFPMG. The chain crosses the membrane as a helical span at residues 819-839; sequence ALLILKIMIPYILLSTALGIM. The Lumenal portion of the chain corresponds to 840 to 848; that stretch reads NLKLNIKDY. A helical transmembrane segment spans residues 849 to 869; that stretch reads TVSSLILSTSDVLSLNFFYLL. Topologically, residues 870-885 are cytoplasmic; sequence RTEGSWLDIGVTISNY. Residues 886 to 906 traverse the membrane as a helical segment; the sequence is CLAILSSLFMIVLELFSHFLL. At 907 to 925 the chain is on the lumenal side; sequence KNVRDNGMDIAASKQQKRH.

It belongs to the PIGG/PIGN/PIGO family. PIGN subfamily.

It is found in the endoplasmic reticulum membrane. Its pathway is glycolipid biosynthesis; glycosylphosphatidylinositol-anchor biosynthesis. Its function is as follows. Ethanolamine phosphate transferase involved in glycosylphosphatidylinositol-anchor biosynthesis. Transfers ethanolamine phosphate to the first alpha-1,4-linked mannose of the glycosylphosphatidylinositol precursor of GPI-anchor. The protein is GPI ethanolamine phosphate transferase 1 (MCD4) of Eremothecium gossypii (strain ATCC 10895 / CBS 109.51 / FGSC 9923 / NRRL Y-1056) (Yeast).